Here is a 389-residue protein sequence, read N- to C-terminus: Putative F-box protein At3g10240 (389 aa).

Residues 1 to 26 (MEQQEEKRKIKAYQRKSKRSKSGSSS) form a disordered region. The span at 9–21 (KIKAYQRKSKRSK) shows a compositional bias: basic residues. Positions 21 to 66 (KSGSSSIPLDLVSEILLRLPEKSVARFRCVSKPWSSITTEPYFINL) constitute an F-box domain.

The polypeptide is Putative F-box protein At3g10240 (Arabidopsis thaliana (Mouse-ear cress)).